A 144-amino-acid polypeptide reads, in one-letter code: MSLYECVFIARQDISTPQVETLTEELSNIITQGGGSVSKKEYWGLRNIAYRVKKNRKGHYVLLNIDAPSAAVKEMERQMSINEDVLRTLTIRVEELEEGPSAMMQSKSRDDRPRRGEGDDRPRRDDREDRPRRDREPRRMEGGE.

The interval 95 to 144 is disordered; the sequence is ELEEGPSAMMQSKSRDDRPRRGEGDDRPRRDDREDRPRRDREPRRMEGGE. Positions 107–144 are enriched in basic and acidic residues; sequence KSRDDRPRRGEGDDRPRRDDREDRPRRDREPRRMEGGE.

This sequence belongs to the bacterial ribosomal protein bS6 family.

Its function is as follows. Binds together with bS18 to 16S ribosomal RNA. This is Small ribosomal subunit protein bS6 from Paramagnetospirillum magneticum (strain ATCC 700264 / AMB-1) (Magnetospirillum magneticum).